Reading from the N-terminus, the 123-residue chain is MILGIGTDIVYVPRISNLWKKFGTKFLKRVFSEKEIEDSKKYTNFDAQVRHFAKRFAAKEAYVKAVGTGFGKSIKMPDIIVSNNLHGKPQITINNSNIKYKIELSISDEKDYAIAFVVLYTEL.

Residues Asp8 and Glu60 each contribute to the Mg(2+) site.

Belongs to the P-Pant transferase superfamily. AcpS family. Requires Mg(2+) as cofactor.

The protein localises to the cytoplasm. The enzyme catalyses apo-[ACP] + CoA = holo-[ACP] + adenosine 3',5'-bisphosphate + H(+). In terms of biological role, transfers the 4'-phosphopantetheine moiety from coenzyme A to a Ser of acyl-carrier-protein. This is Holo-[acyl-carrier-protein] synthase from Ehrlichia chaffeensis (strain ATCC CRL-10679 / Arkansas).